The following is a 121-amino-acid chain: Cell division protein FtsL (121 aa).

Over 1–34 the chain is Cytoplasmic; that stretch reads MISRVTEALSKVKGSMGSHERHALPGVIGDDLLR. A helical membrane pass occupies residues 35 to 57; sequence FGKLPLCLFICIILTAVTVVTTA. The Periplasmic segment spans residues 58-121; that stretch reads HHTRLLTAQR…PSQENIVVQK (64 aa).

The protein belongs to the FtsL family. As to quaternary structure, part of a complex composed of FtsB, FtsL and FtsQ.

The protein localises to the cell inner membrane. Functionally, essential cell division protein. May link together the upstream cell division proteins, which are predominantly cytoplasmic, with the downstream cell division proteins, which are predominantly periplasmic. This is Cell division protein FtsL from Shigella dysenteriae serotype 1 (strain Sd197).